A 113-amino-acid chain; its full sequence is Large ribosomal subunit protein bL19 (113 aa).

It belongs to the bacterial ribosomal protein bL19 family.

This protein is located at the 30S-50S ribosomal subunit interface and may play a role in the structure and function of the aminoacyl-tRNA binding site. This is Large ribosomal subunit protein bL19 from Mycobacterium sp. (strain JLS).